Reading from the N-terminus, the 360-residue chain is Archaemetzincin-2 (360 aa).

His254 serves as a coordination point for Zn(2+). The active-site Proton acceptor is Glu255. 6 residues coordinate Zn(2+): His258, His264, Cys265, Cys270, Cys289, and Cys292.

Belongs to the peptidase M54 family. The cofactor is Zn(2+).

Functionally, probable zinc metalloprotease. The sequence is that of Archaemetzincin-2 (AMZ2) from Macaca fascicularis (Crab-eating macaque).